The sequence spans 156 residues: Small ribosomal subunit protein uS7 (156 aa).

The protein belongs to the universal ribosomal protein uS7 family. Part of the 30S ribosomal subunit. Contacts proteins S9 and S11.

Functionally, one of the primary rRNA binding proteins, it binds directly to 16S rRNA where it nucleates assembly of the head domain of the 30S subunit. Is located at the subunit interface close to the decoding center, probably blocks exit of the E-site tRNA. This Nitratidesulfovibrio vulgaris (strain ATCC 29579 / DSM 644 / CCUG 34227 / NCIMB 8303 / VKM B-1760 / Hildenborough) (Desulfovibrio vulgaris) protein is Small ribosomal subunit protein uS7.